The primary structure comprises 447 residues: GTPase Der (447 aa).

EngA-type G domains are found at residues 3-167 (PVIA…QLPE) and 180-353 (IRLA…KAAT). GTP contacts are provided by residues 9 to 16 (GRPNVGKS), 56 to 60 (DTGGF), 119 to 122 (NKAE), 186 to 193 (GRPNVGKS), 233 to 237 (DTAGL), and 298 to 301 (NKWD). Residues 353–438 (TCKMPTPVLT…PLRIEMKTSR (86 aa)) enclose the KH-like domain.

This sequence belongs to the TRAFAC class TrmE-Era-EngA-EngB-Septin-like GTPase superfamily. EngA (Der) GTPase family. As to quaternary structure, associates with the 50S ribosomal subunit.

Functionally, GTPase that plays an essential role in the late steps of ribosome biogenesis. The polypeptide is GTPase Der (Paracidovorax citrulli (strain AAC00-1) (Acidovorax citrulli)).